A 237-amino-acid chain; its full sequence is Sugar fermentation stimulation protein homolog (237 aa).

It belongs to the SfsA family.

The polypeptide is Sugar fermentation stimulation protein homolog (Actinobacillus pleuropneumoniae serotype 3 (strain JL03)).